A 315-amino-acid chain; its full sequence is Methionyl-tRNA formyltransferase (315 aa).

113-116 (SLLP) contributes to the (6S)-5,6,7,8-tetrahydrofolate binding site.

The protein belongs to the Fmt family.

It carries out the reaction L-methionyl-tRNA(fMet) + (6R)-10-formyltetrahydrofolate = N-formyl-L-methionyl-tRNA(fMet) + (6S)-5,6,7,8-tetrahydrofolate + H(+). Functionally, attaches a formyl group to the free amino group of methionyl-tRNA(fMet). The formyl group appears to play a dual role in the initiator identity of N-formylmethionyl-tRNA by promoting its recognition by IF2 and preventing the misappropriation of this tRNA by the elongation apparatus. The chain is Methionyl-tRNA formyltransferase from Escherichia coli (strain SMS-3-5 / SECEC).